A 404-amino-acid polypeptide reads, in one-letter code: Exodeoxyribonuclease 7 large subunit (404 aa).

It belongs to the XseA family. As to quaternary structure, heterooligomer composed of large and small subunits.

It localises to the cytoplasm. The catalysed reaction is Exonucleolytic cleavage in either 5'- to 3'- or 3'- to 5'-direction to yield nucleoside 5'-phosphates.. Bidirectionally degrades single-stranded DNA into large acid-insoluble oligonucleotides, which are then degraded further into small acid-soluble oligonucleotides. In Fusobacterium nucleatum subsp. nucleatum (strain ATCC 25586 / DSM 15643 / BCRC 10681 / CIP 101130 / JCM 8532 / KCTC 2640 / LMG 13131 / VPI 4355), this protein is Exodeoxyribonuclease 7 large subunit.